The chain runs to 314 residues: MTAASSAGPRPRHLLDFQDWTPERLEAVLDNADTMLQVLDRPVKKVPALQGLTVCTAFFENSTRTRTSFELAARRMSADVVSFAAGNSSVSKGESLRDTIEVLTAYKVDAYVVRHHAAGAAHLVAKYSGKPVINAGDGRRAHPTQALLDAYTIRQEYGSLEGKKVAIIGDIRHSRVARSNAELLPKLGAEVVLCGPATLLPPDLAGQPGVRLTTDPREAVRGAHAVMALRLQQERMNGGYLASLQEYADTYQVNETLMREAESGAIVLHPGPMNRDLEISTEAADGPRSRIIRQVENGQAVRMSVLYHLLVGRA.

Positions 64 and 65 each coordinate carbamoyl phosphate. Lys-92 contributes to the L-aspartate binding site. Positions 114, 142, and 145 each coordinate carbamoyl phosphate. L-aspartate-binding residues include Arg-175 and Arg-230. Gly-271 and Pro-272 together coordinate carbamoyl phosphate.

The protein belongs to the aspartate/ornithine carbamoyltransferase superfamily. ATCase family. In terms of assembly, heterododecamer (2C3:3R2) of six catalytic PyrB chains organized as two trimers (C3), and six regulatory PyrI chains organized as three dimers (R2).

It carries out the reaction carbamoyl phosphate + L-aspartate = N-carbamoyl-L-aspartate + phosphate + H(+). It functions in the pathway pyrimidine metabolism; UMP biosynthesis via de novo pathway; (S)-dihydroorotate from bicarbonate: step 2/3. Functionally, catalyzes the condensation of carbamoyl phosphate and aspartate to form carbamoyl aspartate and inorganic phosphate, the committed step in the de novo pyrimidine nucleotide biosynthesis pathway. This is Aspartate carbamoyltransferase catalytic subunit from Deinococcus radiodurans (strain ATCC 13939 / DSM 20539 / JCM 16871 / CCUG 27074 / LMG 4051 / NBRC 15346 / NCIMB 9279 / VKM B-1422 / R1).